The following is a 112-amino-acid chain: uncharacterized protein (112 aa).

This sequence to U.parvum UU089.1.

This is an uncharacterized protein from Synechocystis sp. (strain ATCC 27184 / PCC 6803 / Kazusa).